We begin with the raw amino-acid sequence, 475 residues long: Legumain (475 aa).

The signal sequence occupies residues 1 to 15; that stretch reads MVMMLVMLSLHGTAA. Residues 16-35 constitute a propeptide that is removed on maturation; that stretch reads RLNRREWDSVIQLPTEPVDD. The active site involves His-158. The Nucleophile role is filled by Cys-200. A disulfide bridge connects residues Cys-233 and Cys-247. N-linked (GlcNAc...) asparagine glycosylation is present at Asn-300. 2 disulfides stabilise this stretch: Cys-411–Cys-441 and Cys-423–Cys-458.

Belongs to the peptidase C13 family. In terms of assembly, homodimer.

It catalyses the reaction Hydrolysis of proteins and small molecule substrates at -Asn-|-Xaa- bonds.. Its activity is regulated as follows. Repressed by various protease inhibitors including p-chloromercuribenzene sulfonic acid (PCMBS), N-ethylmaleimide, kininogen, elastatinal, cystatin EW and leupeptin. Its function is as follows. Asparaginyl endopeptidase able to cleave almost all peptide bonds on the carboxyl side of Asn residues, except at the NH2 terminus or second position or with N-glycosylated Asn. Responsible for the maturation (circular permutation) of concanavalin A from its precursor, by performing both cleavage and cleavage-coupled transpeptidation to form conA. This Canavalia ensiformis (Jack bean) protein is Legumain.